The primary structure comprises 451 residues: Gamma-aminobutyric acid receptor subunit alpha-2 (451 aa).

Residues 1–28 (MRTKLSTCNVWFPLLVLLVWNPARLVLA) form the signal peptide. The Extracellular segment spans residues 29-249 (NIQEDEAKNN…MTAHFHLKRK (221 aa)). The N-linked (GlcNAc...) asparagine glycan is linked to asparagine 38. Residue arginine 94 coordinates 4-aminobutanoate. 2 N-linked (GlcNAc...) asparagine glycosylation sites follow: asparagine 114 and asparagine 138. A 4-aminobutanoate-binding site is contributed by threonine 157. Cysteines 166 and 180 form a disulfide. The next 3 helical transmembrane spans lie at 250 to 270 (IGYF…LSQV), 281 to 300 (ARTV…SISA), and 312 to 332 (AMDW…IEFA). The Cytoplasmic segment spans residues 333–420 (TVNYFTKRGW…FNSVSKIDRM (88 aa)). Residues 389–408 (KSATTPEPNKKPENKPAEAK) form a disordered region. Positions 396–408 (PNKKPENKPAEAK) are enriched in basic and acidic residues. A helical membrane pass occupies residues 421 to 441 (SRIVFPVLFGTFNLVYWATYL). The Extracellular segment spans residues 442–451 (NREPVLGVSP).

This sequence belongs to the ligand-gated ion channel (TC 1.A.9) family. Gamma-aminobutyric acid receptor (TC 1.A.9.5) subfamily. GABRA2 sub-subfamily. In terms of assembly, heteropentamer, formed by a combination of alpha (GABRA1-6), beta (GABRB1-3), gamma (GABRG1-3), delta (GABRD), epsilon (GABRE), rho (GABRR1-3), pi (GABRP) and theta (GABRQ) subunits, each subunit exhibiting distinct physiological and pharmacological properties. Binds UBQLN1. Interacts with KIF21B. Interacts with LHFPL4. Interacts with SHISA7; interaction leads to the regulation of GABA(A) receptor trafficking, channel deactivation kinetics and pharmacology. In terms of processing, glycosylated. In terms of tissue distribution, expressed in brain (at protein level).

Its subcellular location is the postsynaptic cell membrane. It localises to the cell membrane. The protein resides in the cytoplasmic vesicle membrane. The protein localises to the cell projection. It is found in the dendrite. The enzyme catalyses chloride(in) = chloride(out). Its activity is regulated as follows. Activated by pentobarbital. Inhibited by the antagonist bicuculline. Alpha subunit of the heteropentameric ligand-gated chloride channel gated by gamma-aminobutyric acid (GABA), a major inhibitory neurotransmitter in the brain. GABA-gated chloride channels, also named GABA(A) receptors (GABAAR), consist of five subunits arranged around a central pore and contain GABA active binding site(s) located at the alpha and beta subunit interface(s). When activated by GABA, GABAARs selectively allow the flow of chloride anions across the cell membrane down their electrochemical gradient. Chloride influx into the postsynaptic neuron following GABAAR opening decreases the neuron ability to generate a new action potential, thereby reducing nerve transmission. The alpha-2 subunit exhibits synaptogenic activity together with beta-2 and very little to no activity together with beta-3, the gamma-2 subunit being necessary but not sufficient to induce rapid synaptic contacts formation. This chain is Gamma-aminobutyric acid receptor subunit alpha-2, found in Rattus norvegicus (Rat).